We begin with the raw amino-acid sequence, 103 residues long: Integration host factor subunit alpha (103 aa).

The interval C55 to I74 is disordered.

The protein belongs to the bacterial histone-like protein family. Heterodimer of an alpha and a beta chain.

This protein is one of the two subunits of integration host factor, a specific DNA-binding protein that functions in genetic recombination as well as in transcriptional and translational control. This chain is Integration host factor subunit alpha, found in Thiobacillus denitrificans (strain ATCC 25259 / T1).